Reading from the N-terminus, the 636-residue chain is Threonine--tRNA ligase (636 aa).

The 61-residue stretch at 1–61 (MLKITLKDGS…NENCEVEILS (61 aa)) folds into the TGS domain. Positions 244–534 (EHRKLGKELD…LIEHYEGKFP (291 aa)) are catalytic. Positions 335, 386, and 511 each coordinate Zn(2+).

The protein belongs to the class-II aminoacyl-tRNA synthetase family. As to quaternary structure, homodimer. Requires Zn(2+) as cofactor.

It localises to the cytoplasm. It carries out the reaction tRNA(Thr) + L-threonine + ATP = L-threonyl-tRNA(Thr) + AMP + diphosphate + H(+). Catalyzes the attachment of threonine to tRNA(Thr) in a two-step reaction: L-threonine is first activated by ATP to form Thr-AMP and then transferred to the acceptor end of tRNA(Thr). Also edits incorrectly charged L-seryl-tRNA(Thr). The polypeptide is Threonine--tRNA ligase (Natranaerobius thermophilus (strain ATCC BAA-1301 / DSM 18059 / JW/NM-WN-LF)).